The primary structure comprises 520 residues: Endosomal/lysosomal proton channel TMEM175 (520 aa).

The disordered stretch occupies residues 1 to 27 (MGENDESEIIEHHDDEEMEKRRPPRTH). At 1–49 (MGENDESEIIEHHDDEEMEKRRPPRTHAQSFLESVASSVKEGHSSTQSS) the chain is on the cytoplasmic side. Basic and acidic residues predominate over residues 9–21 (IIEHHDDEEMEKR). A helical transmembrane segment spans residues 50–72 (HRLLAYSDALISIIATVMILPVA). The RxxxFSD motif 1 motif lies at 51 to 57 (RLLAYSD). Residues 73–93 (HTKIQEDEELKQSIQALLTTK) are Lumenal-facing. The segment at 74–79 (TKIQED) is short helix H1-1. The short helix H2-1 stretch occupies residues 81-87 (ELKQSIQ). The chain crosses the membrane as a helical span at residues 94–116 (IAVYLMTFLIVTVAWAAHIRLFQ). At 117–122 (VIERID) the chain is on the cytoplasmic side. Residues 123-144 (DTLALLNLACMMLITFLPYTFS) traverse the membrane as a helical segment. The Lumenal segment spans residues 145–154 (LMATFPNNIL). A helical membrane pass occupies residues 155–176 (GILLFCACVMVIGLIQALIVLY). Topologically, residues 177-200 (GFSHPFLLNDQIQMSENQAYYKQH) are cytoplasmic. Transmembrane regions (helical) follow at residues 201 to 221 (ILKV…FSFI) and 222 to 242 (FFQL…ISQC). Over 243–274 (LKWIRSKAIGGQTDESPDSMPFYTYHPSEPLS) the chain is Cytoplasmic. The chain crosses the membrane as a helical span at residues 275–299 (KERVEAFSDGVFAIVATLLILDICE). Residues 277–283 (RVEAFSD) carry the RxxxFSD motif 2 motif. At 300–326 (GNVPDPSVVKKKFDNSLIAALQEYGPE) the chain is on the lumenal side. The segment at 305 to 313 (PSVVKKKFD) is short helix H1-2. The interval 315–321 (SLIAALQ) is short helix H2-2. Residues 327–349 (YLAYFGSFVTVGLLWFVHHSLFL) form a helical membrane-spanning segment. Over 350–355 (HVTKAT) the chain is Cytoplasmic. The helical transmembrane segment at 356 to 377 (RLMGLFNTFSLAFVGGLPLAYQ) threads the bilayer. Residues 378-392 (LTHESPRGSRNELEA) are Lumenal-facing. The helical transmembrane segment at 393 to 413 (VQISCVIIFFASLFQLAIWVT) threads the bilayer. The Cytoplasmic segment spans residues 414 to 433 (ALFTERETLHPYVRYGGREH). The chain crosses the membrane as a helical span at residues 434–457 (TFMLAKLSLYPCVALGTFFITCIL). The Lumenal portion of the chain corresponds to 458 to 459 (SR). The helical transmembrane segment at 460-486 (FSAPIFHMMEICIPFAFLLLRLLVRVA) threads the bilayer. At 487–520 (LALLRWLFCSARNDLERIPVEEEESRLPINDIVT) the chain is on the cytoplasmic side.

It belongs to the TMEM175 family. As to quaternary structure, homodimer.

Its subcellular location is the endosome membrane. It is found in the lysosome membrane. The enzyme catalyses H(+)(in) = H(+)(out). The catalysed reaction is K(+)(in) = K(+)(out). Its activity is regulated as follows. Active at low pH (under pH 4.6): proton channel activity is activated by luminal side protons. Polyunsaturated fatty acids, such as arachidonic acid, also activate the channel activity. Its function is as follows. Proton-activated proton channel that catalyzes proton efflux from endosomes and lysosomes to maintain a steady-state pH. Activated at low pH (under pH 4.6) by luminal side protons: selectively mediates lysosomal proton release from lysosomes, eliciting a proton leak that balances V-ATPase activity to maintain pH homeostasis. Regulation of lumenal pH stability is required for autophagosome-lysosome fusion. Also acts as a potassium channel at higher pH, regulating potassium conductance in endosomes and lysosomes. The sequence is that of Endosomal/lysosomal proton channel TMEM175 from Danio rerio (Zebrafish).